Here is a 693-residue protein sequence, read N- to C-terminus: Guanyl-specific ribonuclease pgl-3 (693 aa).

The involved in dimerization stretch occupies residues 205 to 447 (KKLMIEGPKI…VNRIIESLEK (243 aa)). The active-site Proton acceptor is the H437. Disordered stretches follow at residues 445-468 (LEKS…GPTT), 523-591 (AEKN…DATP), and 620-693 (SSNG…RGGS). A compositionally biased stretch (low complexity) spans 447–468 (KSSSSEPSATAKQTTTSNGPTT). 2 stretches are compositionally biased toward polar residues: residues 528 to 548 (NTPS…SPTK) and 569 to 580 (ITKVSPQPQERT). Positions 581 to 614 (GTAWGSGDATPVPLATPVNEYKVSGFGAAPVASG) are required for interaction with sepa-1. Composition is skewed to gly residues over residues 625 to 634 (SGRGSYGGGR), 641 to 660 (RGAY…SRGY), and 668 to 693 (RGSY…RGGS). Residues 633–693 (GRGGDRGGRG…GFFGGSRGGS (61 aa)) form an RNA-binding RGG-box region.

May form a homodimer. Interacts with pgl-1 and pgl-2; this association is not required for P-granule localization of either pgl-1 or pgl-2. Interacts with sepa-1; the interaction is enhanced in the presence of RNA. Interacts with prmt-1; the interaction is direct. In terms of processing, methylated at arginine residues in the RNA-binding RGG-box by prmt-1. Methylation promotes P-granule degradation by autophagy. As to expression, highly expressed in the germline. Expressed in most somatic cells.

The protein localises to the cytoplasmic granule. It catalyses the reaction [RNA] containing guanosine + H2O = an [RNA fragment]-3'-guanosine-3'-phosphate + a 5'-hydroxy-ribonucleotide-3'-[RNA fragment].. Guanyl-specific endoribonuclease which cleaves the phosphodiester bond in single-stranded RNA between the 3'-guanylic residue and the 5'-OH residue of adjacent nucleotide, resulting in the formation of a corresponding 2',3'-cyclic phosphate intermediate. P-granule component involved in germline development. Together with the P-granule component pgl-1, is involved in the formation of P-granules. Together with pgl-1, probably recruits other granule components such as pos-1, mex-3 and glh-1, and RNA to P-granules. In vitro, binds mRNA; this interaction is required for the formation of liquid-like droplets that resemble P-granules. Most likely recruits pgl-1 into P-granules during autophagy. Associates with adapters such as sepa-1 and is required for the accumulation and degradation of P-granules by autophagy in somatic cells. This ensures exclusive localization of the P-granules in germ cells. In addition, may act redundantly with pgl-1 to protect germ cells from excessive germline apoptosis during normal oogenesis and development of the two gonadal arms. This may in part be through regulating the localization of sir-2.1 which is involved in germ cell apoptosis. May protect somatic cells from excessive apoptosis during normal development. This Caenorhabditis elegans protein is Guanyl-specific ribonuclease pgl-3.